Reading from the N-terminus, the 425-residue chain is Serine--tRNA ligase (425 aa).

233–235 (TAE) lines the L-serine pocket. 264–266 (RRE) is an ATP binding site. An L-serine-binding site is contributed by E287. 351–354 (EISS) lines the ATP pocket. S385 lines the L-serine pocket.

This sequence belongs to the class-II aminoacyl-tRNA synthetase family. Type-1 seryl-tRNA synthetase subfamily. Homodimer. The tRNA molecule binds across the dimer.

Its subcellular location is the cytoplasm. It carries out the reaction tRNA(Ser) + L-serine + ATP = L-seryl-tRNA(Ser) + AMP + diphosphate + H(+). It catalyses the reaction tRNA(Sec) + L-serine + ATP = L-seryl-tRNA(Sec) + AMP + diphosphate + H(+). It participates in aminoacyl-tRNA biosynthesis; selenocysteinyl-tRNA(Sec) biosynthesis; L-seryl-tRNA(Sec) from L-serine and tRNA(Sec): step 1/1. Its function is as follows. Catalyzes the attachment of serine to tRNA(Ser). Is also able to aminoacylate tRNA(Sec) with serine, to form the misacylated tRNA L-seryl-tRNA(Sec), which will be further converted into selenocysteinyl-tRNA(Sec). In Prochlorococcus marinus (strain MIT 9215), this protein is Serine--tRNA ligase.